Here is a 95-residue protein sequence, read N- to C-terminus: ESAT-6-like protein EsxA (95 aa).

Belongs to the WXG100 family. ESAT-6 subfamily. Forms a tight 1:1 complex with EsxB.

The chain is ESAT-6-like protein EsxA from Corynebacterium diphtheriae (strain ATCC 700971 / NCTC 13129 / Biotype gravis).